Consider the following 291-residue polypeptide: ATP synthase gamma chain (291 aa).

This sequence belongs to the ATPase gamma chain family. F-type ATPases have 2 components, CF(1) - the catalytic core - and CF(0) - the membrane proton channel. CF(1) has five subunits: alpha(3), beta(3), gamma(1), delta(1), epsilon(1). CF(0) has three main subunits: a, b and c.

It is found in the cell inner membrane. Functionally, produces ATP from ADP in the presence of a proton gradient across the membrane. The gamma chain is believed to be important in regulating ATPase activity and the flow of protons through the CF(0) complex. In Burkholderia ambifaria (strain MC40-6), this protein is ATP synthase gamma chain.